The following is a 170-amino-acid chain: Photosystem I assembly protein Ycf3 (170 aa).

TPR repeat units lie at residues 35-68 (AFTH…EIDP), 72-105 (SYIL…NSSL), and 120-153 (GEQA…APSN).

It belongs to the Ycf3 family.

It localises to the plastid. Its subcellular location is the chloroplast thylakoid membrane. Its function is as follows. Essential for the assembly of the photosystem I (PSI) complex. May act as a chaperone-like factor to guide the assembly of the PSI subunits. This Anthoceros angustus (Hornwort) protein is Photosystem I assembly protein Ycf3.